The chain runs to 576 residues: Small ribosomal subunit protein mS80 (rPPR6) (576 aa).

Residues 1 to 76 (MLRSFLCRSQ…SLPADEIPIS (76 aa)) constitute a mitochondrion transit peptide. PPR repeat units lie at residues 230 to 264 (NLEI…GFTP), 265 to 299 (NAKT…GVLS), 300 to 336 (EGEQ…SLPP), 341 to 370 (TLIT…ARRR), 371 to 405 (GIKP…GPAP), 406 to 440 (GNAV…GLKP), 441 to 475 (DVYT…HKKL), 476 to 510 (SPVT…GVQP), and 511 to 546 (NADE…GLHL).

This sequence belongs to the PPR family. P subfamily. In terms of assembly, component of the mitochondrial ribosome small subunit.

It localises to the mitochondrion. The polypeptide is Small ribosomal subunit protein mS80 (rPPR6) (Arabidopsis thaliana (Mouse-ear cress)).